The primary structure comprises 317 residues: MTDKVQTTLLFLAIGEFSVGILGNAFIGLVNCMDWVKKRKIASIDLILTSLAISRICLLCVILLDCFMLVLYPDVYATGKQMRIIDFFWTLTNHLSIWFATCLSIYYFFKIANFFHPLFLWMKWRIDRVISWILLGCMVLSVFINLPATENLNADFRRCVKAKRKTNLTWSCRVTKAQHASTKLFLNLVTLLPFSVCLVSFFLLILSLWRHIRRMQLSATGCRDPSTEAHVRALKAVISFLFLFIAYYLSFLIATSSYFIPETELAVIFGEFIALIYPSSHSFILILGNNKLRRASLKVLWTVMSILKGRKFQQKQI.

Residues 1 to 9 (MTDKVQTTL) lie on the Extracellular side of the membrane. The chain crosses the membrane as a helical span at residues 10-30 (LFLAIGEFSVGILGNAFIGLV). The Cytoplasmic portion of the chain corresponds to 31–55 (NCMDWVKKRKIASIDLILTSLAISR). The chain crosses the membrane as a helical span at residues 56-76 (ICLLCVILLDCFMLVLYPDVY). Over 77–94 (ATGKQMRIIDFFWTLTNH) the chain is Extracellular. A helical transmembrane segment spans residues 95–115 (LSIWFATCLSIYYFFKIANFF). Residues 116–128 (HPLFLWMKWRIDR) lie on the Cytoplasmic side of the membrane. The chain crosses the membrane as a helical span at residues 129–149 (VISWILLGCMVLSVFINLPAT). The Extracellular portion of the chain corresponds to 150-187 (ENLNADFRRCVKAKRKTNLTWSCRVTKAQHASTKLFLN). Asparagine 167 carries N-linked (GlcNAc...) asparagine glycosylation. Residues 188–208 (LVTLLPFSVCLVSFFLLILSL) traverse the membrane as a helical segment. The Cytoplasmic segment spans residues 209–235 (WRHIRRMQLSATGCRDPSTEAHVRALK). A helical transmembrane segment spans residues 236–256 (AVISFLFLFIAYYLSFLIATS). Topologically, residues 257 to 266 (SYFIPETELA) are extracellular. The chain crosses the membrane as a helical span at residues 267–287 (VIFGEFIALIYPSSHSFILIL). At 288-317 (GNNKLRRASLKVLWTVMSILKGRKFQQKQI) the chain is on the cytoplasmic side.

This sequence belongs to the G-protein coupled receptor T2R family.

The protein resides in the membrane. Its function is as follows. Gustducin-coupled receptor implicated in the perception of bitter compounds in the oral cavity and the gastrointestinal tract. Signals through PLCB2 and the calcium-regulated cation channel TRPM5. This chain is Taste receptor type 2 member 7 (TAS2R7), found in Papio hamadryas (Hamadryas baboon).